The primary structure comprises 472 residues: tRNA(Ile)-lysidine synthase (472 aa).

Residue 25–30 (SGGPDS) coordinates ATP.

It belongs to the tRNA(Ile)-lysidine synthase family.

Its subcellular location is the cytoplasm. It carries out the reaction cytidine(34) in tRNA(Ile2) + L-lysine + ATP = lysidine(34) in tRNA(Ile2) + AMP + diphosphate + H(+). In terms of biological role, ligates lysine onto the cytidine present at position 34 of the AUA codon-specific tRNA(Ile) that contains the anticodon CAU, in an ATP-dependent manner. Cytidine is converted to lysidine, thus changing the amino acid specificity of the tRNA from methionine to isoleucine. This chain is tRNA(Ile)-lysidine synthase (tilS), found in Bacillus subtilis (strain 168).